Consider the following 363-residue polypeptide: Outer membrane porin F (363 aa).

The N-terminal stretch at 1–22 (MMKRKILAAVIPALLAAATANA) is a signal peptide.

This sequence belongs to the Gram-negative porin family. In terms of assembly, homotrimer. Forms mixed heterotrimers with OmpC and with PhoE; other mixed heterotrimers with other porins are also probable.

It is found in the cell outer membrane. Functionally, forms pores that allow passive diffusion of small molecules across the outer membrane. This chain is Outer membrane porin F, found in Salmonella typhimurium (strain SL1344).